Here is a 1026-residue protein sequence, read N- to C-terminus: Tyrosine-protein phosphatase 1 (1026 aa).

An FERM domain is found at 29–315 (IRCTVTFLDS…EQHTFFRLKT (287 aa)). Disordered regions lie at residues 376–396 (SIDS…LPSS), 430–456 (PLTT…SLRQ), 489–515 (GIHA…KSAN), and 584–616 (SFAS…DQVV). A compositionally biased stretch (polar residues) spans 446 to 456 (DSESSAPSLRQ). Positions 600–609 (SPQSNKSSSP) are enriched in low complexity. Residues 617 to 689 (TIKMRPDRHG…DHVVQFIRSA (73 aa)) form the PDZ domain. Positions 753–1011 (VVDHFEMLYR…TFVCESILRA (259 aa)) constitute a Tyrosine-protein phosphatase domain. Residues Asp-920, 952-958 (CSAGIGR), and Gln-996 contribute to the substrate site. Cys-952 serves as the catalytic Phosphocysteine intermediate.

It belongs to the protein-tyrosine phosphatase family. Non-receptor class subfamily.

The protein resides in the cytoplasm. Its subcellular location is the cytoskeleton. The catalysed reaction is O-phospho-L-tyrosyl-[protein] + H2O = L-tyrosyl-[protein] + phosphate. This Caenorhabditis elegans protein is Tyrosine-protein phosphatase 1 (ptp-1).